The primary structure comprises 347 residues: tRNA N6-adenosine threonylcarbamoyltransferase (347 aa).

Fe cation-binding residues include His-117 and His-121. Residues Leu-140–Gly-144, Asp-173, Gly-186, and Asn-280 each bind substrate. Residue Asp-308 participates in Fe cation binding.

This sequence belongs to the KAE1 / TsaD family. Fe(2+) serves as cofactor.

The protein localises to the cytoplasm. It catalyses the reaction L-threonylcarbamoyladenylate + adenosine(37) in tRNA = N(6)-L-threonylcarbamoyladenosine(37) in tRNA + AMP + H(+). Functionally, required for the formation of a threonylcarbamoyl group on adenosine at position 37 (t(6)A37) in tRNAs that read codons beginning with adenine. Is involved in the transfer of the threonylcarbamoyl moiety of threonylcarbamoyl-AMP (TC-AMP) to the N6 group of A37, together with TsaE and TsaB. TsaD likely plays a direct catalytic role in this reaction. The polypeptide is tRNA N6-adenosine threonylcarbamoyltransferase (Psychrobacter sp. (strain PRwf-1)).